Here is a 273-residue protein sequence, read N- to C-terminus: Tryptase (273 aa).

Residues 1–18 (MLKLLLLTLPLLSSLVHA) form the signal peptide. Positions 19–28 (APGPAMTREG) are cleaved as a propeptide — activation peptide. In terms of domain architecture, Peptidase S1 spans 29 to 270 (IVGGQEAHGN…YLDWIHHYVP (242 aa)). Asparagine 49 carries an N-linked (GlcNAc...) asparagine glycan. Cysteine 57 and cysteine 73 are joined by a disulfide. Catalysis depends on charge relay system residues histidine 72 and aspartate 119. An N-linked (GlcNAc...) asparagine glycan is attached at asparagine 130. 3 disulfides stabilise this stretch: cysteine 153–cysteine 228, cysteine 186–cysteine 209, and cysteine 218–cysteine 246. Serine 222 acts as the Charge relay system in catalysis.

The protein belongs to the peptidase S1 family. Tryptase subfamily.

It carries out the reaction Preferential cleavage: Arg-|-Xaa, Lys-|-Xaa, but with more restricted specificity than trypsin.. In terms of biological role, tryptase is the major neutral protease present in mast cells and is secreted upon the coupled activation-degranulation response of this cell type. May play a role in innate immunity. The chain is Tryptase (Tpsab1) from Mus musculus (Mouse).